Here is an 82-residue protein sequence, read N- to C-terminus: Conotoxin Tx6.6 (82 aa).

The N-terminal stretch at 1–19 (MKLTCVMIVAVLFLTAWTL) is a signal peptide. Residues 20–51 (VMADDSNNGLANLFSKLRDEMEDPEGSKLEKK) constitute a propeptide that is removed on maturation. Cystine bridges form between cysteine 53-cysteine 71, cysteine 60-cysteine 76, and cysteine 70-cysteine 81. An Alanine amide; partial modification is found at alanine 82.

Belongs to the O1 superfamily. In terms of tissue distribution, expressed by the venom duct.

The protein resides in the secreted. Its function is as follows. Omega-conotoxins act at presynaptic membranes, they bind and block voltage-gated calcium channels (Cav). This is Conotoxin Tx6.6 from Conus textile (Cloth-of-gold cone).